Consider the following 169-residue polypeptide: Large ribosomal subunit protein uL10 (169 aa).

This sequence belongs to the universal ribosomal protein uL10 family. Part of the ribosomal stalk of the 50S ribosomal subunit. The N-terminus interacts with L11 and the large rRNA to form the base of the stalk. The C-terminus forms an elongated spine to which L12 dimers bind in a sequential fashion forming a multimeric L10(L12)X complex.

Its function is as follows. Forms part of the ribosomal stalk, playing a central role in the interaction of the ribosome with GTP-bound translation factors. This is Large ribosomal subunit protein uL10 from Rickettsia peacockii (strain Rustic).